The following is a 248-amino-acid chain: tRNA pseudouridine synthase A (248 aa).

Aspartate 52 (nucleophile) is an active-site residue. Tyrosine 111 contributes to the substrate binding site.

The protein belongs to the tRNA pseudouridine synthase TruA family. Homodimer.

It carries out the reaction uridine(38/39/40) in tRNA = pseudouridine(38/39/40) in tRNA. In terms of biological role, formation of pseudouridine at positions 38, 39 and 40 in the anticodon stem and loop of transfer RNAs. This is tRNA pseudouridine synthase A from Methylocella silvestris (strain DSM 15510 / CIP 108128 / LMG 27833 / NCIMB 13906 / BL2).